The following is a 257-amino-acid chain: Ciliary microtubule associated protein 1B (257 aa).

STPGR repeat units lie at residues 103 to 129, 182 to 207, and 218 to 243; these read PGPGSYSPENATKATYLSPPAFTLSAR, PGPGTYQVVDPCVYKHKGPQYSMTGR, and PGPGAHYPEMVCFTRAKAPSFSFGIR.

This sequence belongs to the CIMAP family.

It is found in the cell projection. The protein resides in the cilium. It localises to the flagellum. In Danio rerio (Zebrafish), this protein is Ciliary microtubule associated protein 1B (cimap1b).